The following is a 426-amino-acid chain: Glutamate-1-semialdehyde 2,1-aminomutase (426 aa).

N6-(pyridoxal phosphate)lysine is present on Lys265.

The protein belongs to the class-III pyridoxal-phosphate-dependent aminotransferase family. HemL subfamily. Homodimer. Pyridoxal 5'-phosphate is required as a cofactor.

Its subcellular location is the cytoplasm. The enzyme catalyses (S)-4-amino-5-oxopentanoate = 5-aminolevulinate. Its pathway is porphyrin-containing compound metabolism; protoporphyrin-IX biosynthesis; 5-aminolevulinate from L-glutamyl-tRNA(Glu): step 2/2. The protein is Glutamate-1-semialdehyde 2,1-aminomutase of Escherichia fergusonii (strain ATCC 35469 / DSM 13698 / CCUG 18766 / IAM 14443 / JCM 21226 / LMG 7866 / NBRC 102419 / NCTC 12128 / CDC 0568-73).